A 354-amino-acid chain; its full sequence is MTTRIDLRGLLPQELEELAVRLGEAPYRGRQIFRWLHARRAKGIEVMSDLPRAFRERLALVAELPPVRVLNRLVAADGLTRKLLLGLGDGNSIECVLMIYKDGRRRNTACLSSQVGCAMGCSFCATGQGGLQRNLTASEIILQALALGAELAEGEGGNRISNIVFMGMGEPLNNYEAVMKGVRIFEDPSGWGISHRRITLSTCGIVPGIERLAREKPPLELAVSLHAVTNELRDKLMPINRRYPLEELIPACRRYAEITGRRVTFEYALIAGVNDRREDARGLSRLLRDMLAFVNIIPLNPVAGSGFKGVPPAAARAFVALLQEAGLEAAIRDSRGQDIAAACGQLRFASREVL.

E94 functions as the Proton acceptor in the catalytic mechanism. The 230-residue stretch at 103-332 (GRRRNTACLS…QEAGLEAAIR (230 aa)) folds into the Radical SAM core domain. C110 and C343 are joined by a disulfide. C117, C121, and C124 together coordinate [4Fe-4S] cluster. S-adenosyl-L-methionine contacts are provided by residues 169-170 (GE), S201, 224-226 (SLH), and N300. The S-methylcysteine intermediate role is filled by C343.

The protein belongs to the radical SAM superfamily. RlmN family. [4Fe-4S] cluster serves as cofactor.

Its subcellular location is the cytoplasm. It catalyses the reaction adenosine(2503) in 23S rRNA + 2 reduced [2Fe-2S]-[ferredoxin] + 2 S-adenosyl-L-methionine = 2-methyladenosine(2503) in 23S rRNA + 5'-deoxyadenosine + L-methionine + 2 oxidized [2Fe-2S]-[ferredoxin] + S-adenosyl-L-homocysteine. It carries out the reaction adenosine(37) in tRNA + 2 reduced [2Fe-2S]-[ferredoxin] + 2 S-adenosyl-L-methionine = 2-methyladenosine(37) in tRNA + 5'-deoxyadenosine + L-methionine + 2 oxidized [2Fe-2S]-[ferredoxin] + S-adenosyl-L-homocysteine. Its function is as follows. Specifically methylates position 2 of adenine 2503 in 23S rRNA and position 2 of adenine 37 in tRNAs. The chain is Probable dual-specificity RNA methyltransferase RlmN from Moorella thermoacetica (strain ATCC 39073 / JCM 9320).